The following is a 133-amino-acid chain: Small ribosomal subunit protein uS8 (133 aa).

The protein belongs to the universal ribosomal protein uS8 family. As to quaternary structure, part of the 30S ribosomal subunit. Contacts proteins S5 and S12.

In terms of biological role, one of the primary rRNA binding proteins, it binds directly to 16S rRNA central domain where it helps coordinate assembly of the platform of the 30S subunit. The protein is Small ribosomal subunit protein uS8 of Chlamydia trachomatis serovar A (strain ATCC VR-571B / DSM 19440 / HAR-13).